A 468-amino-acid polypeptide reads, in one-letter code: ATP synthase subunit beta (468 aa).

Residue 155–162 participates in ATP binding; it reads GGAGVGKT.

It belongs to the ATPase alpha/beta chains family. As to quaternary structure, F-type ATPases have 2 components, CF(1) - the catalytic core - and CF(0) - the membrane proton channel. CF(1) has five subunits: alpha(3), beta(3), gamma(1), delta(1), epsilon(1). CF(0) has three main subunits: a(1), b(2) and c(9-12). The alpha and beta chains form an alternating ring which encloses part of the gamma chain. CF(1) is attached to CF(0) by a central stalk formed by the gamma and epsilon chains, while a peripheral stalk is formed by the delta and b chains.

It is found in the cell inner membrane. The catalysed reaction is ATP + H2O + 4 H(+)(in) = ADP + phosphate + 5 H(+)(out). Its function is as follows. Produces ATP from ADP in the presence of a proton gradient across the membrane. The catalytic sites are hosted primarily by the beta subunits. The sequence is that of ATP synthase subunit beta from Thermotoga neapolitana (strain ATCC 49049 / DSM 4359 / NBRC 107923 / NS-E).